The sequence spans 1311 residues: Zinc finger protein 521 (1311 aa).

Residues 47 to 67 form a C2H2-type 1; degenerate zinc finger; sequence HSCDSCLQVFESLSDITEHKI. A disordered region spans residues 81–108; sequence DPSCSWPASSPSSKDQTSPSHGEGCDFG. The segment covering 83–102 has biased composition (low complexity); it reads SCSWPASSPSSKDQTSPSHG. C2H2-type zinc fingers lie at residues 118-140, 146-168, 174-196, 202-224, 246-269, 281-304, and 310-332; these read YPCQ…EQSH, FKCT…IKLH, YHCS…LKTH, YKCA…MQVH, QKCS…AECH, LQCM…EQVH, and NSCS…MDSH. The tract at residues 357–398 is disordered; sequence TTPDSNLSVDSSTMVEAAPPIPKSRGRKRAAQQTSDMTGPSS. Polar residues-rich tracts occupy residues 359 to 370 and 387 to 398; these read PDSNLSVDSSTM and AQQTSDMTGPSS. Residues 405 to 429 form a C2H2-type 9; degenerate zinc finger; sequence YSCIYCNKQLFSSLAVLQIHLKTMH. 3 C2H2-type zinc fingers span residues 437 to 460, 477 to 500, and 513 to 536; these read HICQ…KQVH, YQCN…RCSH, and FFCP…RQVH. S546 carries the phosphoserine modification. The C2H2-type 13; atypical zinc finger occupies 560–585; it reads YSCSYCTNSPIFNSVLKLNKHIKENH. Phosphoserine occurs at positions 605 and 608. 7 C2H2-type zinc fingers span residues 634–656, 664–686, 694–717, 722–745, 752–775, 783–805, and 809–832; these read YICN…LKTH, LTCP…VTIH, YICE…LDMH, FRCT…AVKH, YRCT…KHNH, HKCI…ITTH, and YNCR…REKH. The segment at 863-883 is disordered; sequence TNSQESHNSHDGSEEDVDSSE. Residues 886-908 form a C2H2-type 21; degenerate zinc finger; the sequence is YGCDICGAAYTMETLLQNHQLRD. 3 C2H2-type zinc fingers span residues 930 to 952, 959 to 981, and 1020 to 1042; these read YKCN…MQTH, YMCP…KVTH, and FRCV…GTFH. The C2H2-type 25; degenerate zinc-finger motif lies at 1065–1083; that stretch reads YKCASCLKEFRSKQDLVKL. The span at 1105-1119 shows a compositional bias: low complexity; that stretch reads PGLSLPPGASRPGLG. Residues 1105–1136 form a disordered region; it reads PGLSLPPGASRPGLGQNESLSAMEGKGKAGGL. 5 C2H2-type zinc fingers span residues 1138–1161, 1195–1217, 1225–1247, 1256–1279, and 1286–1309; these read TRCS…QTVH, YQCI…VANH, HECK…LIEH, FKCP…FSAH, and YDCT…MTQH. K1146 is covalently cross-linked (Glycyl lysine isopeptide (Lys-Gly) (interchain with G-Cter in SUMO2)).

Belongs to the krueppel C2H2-type zinc-finger protein family. As to quaternary structure, interacts with EBF1. Interacts with SMAD1 and SMAD4. As to expression, widely expressed. Expressed in all B-cell stages.

It is found in the nucleus. In terms of biological role, transcription factor that can both act as an activator or a repressor depending on the context. Involved in BMP signaling and in the regulation of the immature compartment of the hematopoietic system. Associates with SMADs in response to BMP2 leading to activate transcription of BMP target genes. Acts as a transcriptional repressor via its interaction with EBF1, a transcription factor involved specification of B-cell lineage; this interaction preventing EBF1 to bind DNA and activate target genes. This chain is Zinc finger protein 521 (Znf521), found in Mus musculus (Mouse).